Reading from the N-terminus, the 255-residue chain is Ditrans,polycis-undecaprenyl-diphosphate synthase ((2E,6E)-farnesyl-diphosphate specific) (255 aa).

The active site involves Asp-21. Mg(2+) is bound at residue Asp-21. Residues 22 to 25 (GNGR), Trp-26, Arg-34, His-38, and 66 to 68 (SSE) contribute to the substrate site. Residue Asn-69 is the Proton acceptor of the active site. Substrate-binding positions include Trp-70, Arg-72, Arg-189, and 195 to 197 (RIS). Residue Glu-208 coordinates Mg(2+).

This sequence belongs to the UPP synthase family. As to quaternary structure, homodimer. It depends on Mg(2+) as a cofactor.

The catalysed reaction is 8 isopentenyl diphosphate + (2E,6E)-farnesyl diphosphate = di-trans,octa-cis-undecaprenyl diphosphate + 8 diphosphate. Catalyzes the sequential condensation of isopentenyl diphosphate (IPP) with (2E,6E)-farnesyl diphosphate (E,E-FPP) to yield (2Z,6Z,10Z,14Z,18Z,22Z,26Z,30Z,34E,38E)-undecaprenyl diphosphate (di-trans,octa-cis-UPP). UPP is the precursor of glycosyl carrier lipid in the biosynthesis of bacterial cell wall polysaccharide components such as peptidoglycan and lipopolysaccharide. The protein is Ditrans,polycis-undecaprenyl-diphosphate synthase ((2E,6E)-farnesyl-diphosphate specific) of Xylella fastidiosa (strain Temecula1 / ATCC 700964).